The sequence spans 239 residues: Orotidine 5'-phosphate decarboxylase (239 aa).

Substrate is bound by residues D10, K33, 60–69, T124, R186, Q195, G215, and R216; that span reads DLKLYDIPNT. K62 serves as the catalytic Proton donor.

The protein belongs to the OMP decarboxylase family. Type 1 subfamily. Homodimer.

It carries out the reaction orotidine 5'-phosphate + H(+) = UMP + CO2. It functions in the pathway pyrimidine metabolism; UMP biosynthesis via de novo pathway; UMP from orotate: step 2/2. Its function is as follows. Catalyzes the decarboxylation of orotidine 5'-monophosphate (OMP) to uridine 5'-monophosphate (UMP). This Latilactobacillus sakei subsp. sakei (strain 23K) (Lactobacillus sakei subsp. sakei) protein is Orotidine 5'-phosphate decarboxylase.